The chain runs to 1012 residues: Tolloid-like protein 2 (1012 aa).

Residues 1–21 form the signal peptide; sequence MPLATTLGTLVLLLLLPLPRG. Residues 22–146 constitute a propeptide that is removed on maturation; it reads AEVTGDHSNV…AKTFSARVRR (125 aa). Positions 83-135 are disordered; the sequence is KPSIDKPGHDTGGLEETSARWPNDTASNASIQAPRKDGKDATTFLPNPGTSNT. Over residues 126–135 the composition is skewed to polar residues; it reads FLPNPGTSNT. A Peptidase M12A domain is found at 146 to 346; it reads RATTSRTERI…AQARKLYKCP (201 aa). Residue N168 is glycosylated (N-linked (GlcNAc...) asparagine). Intrachain disulfides connect C189–C345, C209–C231, C211–C212, and C348–C374. Residue H239 participates in Zn(2+) binding. The active site involves E240. Residues H243 and H249 each coordinate Zn(2+). 2 CUB domains span residues 348–460 and 461–573; these read CGET…YEAM and CGGD…FFKE. N-linked (GlcNAc...) asparagine glycosylation is found at N358 and N389. Disulfide bonds link C401/C423, C461/C487, C514/C536, C577/C589, C585/C598, C600/C613, C617/C643, C670/C692, C733/C744, C740/C753, C755/C768, and C773/C799. Residues 573-614 form the EGF-like 1; calcium-binding domain; it reads EVDECSWPDHGGCEQRCVNTLGSYTCACDPGYELAADKKTCE. The CUB 3 domain occupies 617–729; that stretch reads CGGFITKLNG…RGFRAHFFSD (113 aa). Residue N625 is glycosylated (N-linked (GlcNAc...) asparagine). One can recognise an EGF-like 2; calcium-binding domain in the interval 729-769; sequence DKDECAKDNGGCQQECVNTFGSYLCRCRNGYRLHENGHDCK. CUB domains are found at residues 773-885 and 886-1002; these read CAYK…HSTE and CGGR…YTST. A glycan (N-linked (GlcNAc...) asparagine) is linked at N802. 3 disulfide bridges follow: C826/C848, C886/C916, and C943/C965. 2 positions are modified to omega-N-methylarginine: R960 and R963.

It depends on Zn(2+) as a cofactor.

It localises to the secreted. Functionally, protease which specifically processes pro-lysyl oxidase. Required for the embryonic development. Predominant protease, which in the development, influences dorsal-ventral patterning and skeletogenesis. The chain is Tolloid-like protein 2 (Tll2) from Mus musculus (Mouse).